We begin with the raw amino-acid sequence, 404 residues long: Cysteine desulfurase IscS (404 aa).

Pyridoxal 5'-phosphate-binding positions include 75-76 (AT), Asn155, Gln183, and 203-205 (SGH). Lys206 carries the post-translational modification N6-(pyridoxal phosphate)lysine. Residue Thr243 coordinates pyridoxal 5'-phosphate. Cys328 (cysteine persulfide intermediate) is an active-site residue. Position 328 (Cys328) interacts with [2Fe-2S] cluster.

It belongs to the class-V pyridoxal-phosphate-dependent aminotransferase family. NifS/IscS subfamily. As to quaternary structure, homodimer. Forms a heterotetramer with IscU, interacts with other sulfur acceptors. Pyridoxal 5'-phosphate serves as cofactor.

It localises to the cytoplasm. It carries out the reaction (sulfur carrier)-H + L-cysteine = (sulfur carrier)-SH + L-alanine. It functions in the pathway cofactor biosynthesis; iron-sulfur cluster biosynthesis. In terms of biological role, master enzyme that delivers sulfur to a number of partners involved in Fe-S cluster assembly, tRNA modification or cofactor biosynthesis. Catalyzes the removal of elemental sulfur atoms from cysteine to produce alanine. Functions as a sulfur delivery protein for Fe-S cluster synthesis onto IscU, an Fe-S scaffold assembly protein, as well as other S acceptor proteins. The polypeptide is Cysteine desulfurase IscS (Klebsiella pneumoniae subsp. pneumoniae (strain ATCC 700721 / MGH 78578)).